A 259-amino-acid polypeptide reads, in one-letter code: Bacillaene synthase dehydratase PksH (259 aa).

Active-site residues include Asp-68 and Glu-137.

It belongs to the enoyl-CoA hydratase/isomerase family.

It localises to the cytoplasm. Its pathway is antibiotic biosynthesis; bacillaene biosynthesis. Its function is as follows. Involved in some intermediate steps for the synthesis of the antibiotic polyketide bacillaene which is involved in secondary metabolism. Catalyzes the dehydration of the (S)-3-hydroxy-3-methylglutaryl group tethered to PksL to a 3-methylglutaconyl moiety. This chain is Bacillaene synthase dehydratase PksH (pksH), found in Bacillus subtilis (strain 168).